The primary structure comprises 393 residues: DNA-directed RNA polymerase subunit Rpo1C (393 aa).

This sequence belongs to the RNA polymerase beta' chain family. As to quaternary structure, part of the RNA polymerase complex.

The protein resides in the cytoplasm. The catalysed reaction is RNA(n) + a ribonucleoside 5'-triphosphate = RNA(n+1) + diphosphate. Functionally, DNA-dependent RNA polymerase (RNAP) catalyzes the transcription of DNA into RNA using the four ribonucleoside triphosphates as substrates. Forms part of the jaw domain. In Halococcus morrhuae (Micrococcus morrhuae), this protein is DNA-directed RNA polymerase subunit Rpo1C.